The following is a 327-amino-acid chain: Peroxidase 15 (327 aa).

The N-terminal stretch at 1–23 (MASFSPLLAMALAIFIFSSHSNA) is a signal peptide. Pyrrolidone carboxylic acid is present on Gln24. Intrachain disulfides connect Cys34/Cys115, Cys67/Cys72, Cys121/Cys323, and Cys200/Cys232. N-linked (GlcNAc...) asparagine glycosylation is present at Asn36. His65 (proton acceptor) is an active-site residue. Ca(2+) is bound by residues Asp66, Val69, Gly71, Asp73, and Ser75. Asn81, Asn96, and Asn159 each carry an N-linked (GlcNAc...) asparagine glycan. Substrate is bound at residue Pro163. Asn168 and Asn171 each carry an N-linked (GlcNAc...) asparagine glycan. His193 contacts heme b. Thr194 lines the Ca(2+) pocket. N-linked (GlcNAc...) asparagine glycans are attached at residues Asn209 and Asn221. Residues Asp245, Thr248, and Asp253 each coordinate Ca(2+). 2 N-linked (GlcNAc...) asparagine glycosylation sites follow: Asn287 and Asn291.

It belongs to the peroxidase family. Classical plant (class III) peroxidase subfamily. Requires Ca(2+) as cofactor. Heme b is required as a cofactor.

The protein localises to the secreted. The enzyme catalyses 2 a phenolic donor + H2O2 = 2 a phenolic radical donor + 2 H2O. Functionally, removal of H(2)O(2), oxidation of toxic reductants, biosynthesis and degradation of lignin, suberization, auxin catabolism, response to environmental stresses such as wounding, pathogen attack and oxidative stress. These functions might be dependent on each isozyme/isoform in each plant tissue. This Ipomoea batatas (Sweet potato) protein is Peroxidase 15.